A 210-amino-acid polypeptide reads, in one-letter code: Ribosomal RNA large subunit methyltransferase E (210 aa).

S-adenosyl-L-methionine contacts are provided by G67, W69, D87, D103, and D128. Catalysis depends on K168, which acts as the Proton acceptor.

The protein belongs to the class I-like SAM-binding methyltransferase superfamily. RNA methyltransferase RlmE family.

It is found in the cytoplasm. The enzyme catalyses uridine(2552) in 23S rRNA + S-adenosyl-L-methionine = 2'-O-methyluridine(2552) in 23S rRNA + S-adenosyl-L-homocysteine + H(+). Functionally, specifically methylates the uridine in position 2552 of 23S rRNA at the 2'-O position of the ribose in the fully assembled 50S ribosomal subunit. In Psychrobacter sp. (strain PRwf-1), this protein is Ribosomal RNA large subunit methyltransferase E.